A 189-amino-acid polypeptide reads, in one-letter code: MTDKTEKVAVDPETVFKRPRECDSPSYQKRQRMALLARKQGAGDSLIAGSAMSKAKKLMTGHAIPPSQLDSQIDDFTGFSKDRMMQKPGSNAPVGGNVTSSFSGDDLECRETASSPKSQREINADIKRKLVKELRCVGQKYEKIFEMLEGVQGPTAVRKRFFESIIKEAARCMRRDFVKHLKKKLKRMI.

The span at 1–23 (MTDKTEKVAVDPETVFKRPRECD) shows a compositional bias: basic and acidic residues. Disordered stretches follow at residues 1–27 (MTDK…SPSY) and 83–118 (RMMQ…SPKS).

The protein belongs to the CT45 family. In terms of tissue distribution, testis specific. Expressed in cancer cell lines.

It localises to the nucleus. In Homo sapiens (Human), this protein is Cancer/testis antigen family 45 member A1.